Reading from the N-terminus, the 477-residue chain is MSGLSRALQLTDIDDFITPSQMCIKPVKIDKAKSKTGAKIMIKDDSCFEESESGKKKLNKVEITLQDCLACSGCITSAEGVLITQQSQEELLRVLQENLTKKATEDWGNVRTIVFTIATQPLLSLAHRYQIGVEDSARHLAGYFRSLGADYVLSTKVADDIALLECRQEFVERYRENENLTMLSSSCPGWVCYAEKTHGNFILPYISTTRSPQQIMGVLVKHVFAEKLNVPASQIYHVTVMPCYDKKLEASREDFFSTANNSRDVDCVITSVEVEQLLSESQRTLAQYDPVDLDWPWSNVPPDFMVWAHEKTLSGGYAEHIFKFAAKELFNEVPRSELEFKQLKNRDFREIILKKNGNTVLKFAIANGFRNIQNLVHKLKRGKVSNYHFVEVMACPSGCINGGAQIRPTTGQHVRELTRKLEELYHNLPQSDPENSLTKLIYTDFLDGFQTEKSYELLHTRYHDVVSELSKSLNINW.

[4Fe-4S] cluster contacts are provided by Cys-23, Cys-68, Cys-71, Cys-74, Cys-187, Cys-243, Cys-395, and Cys-399.

It belongs to the NARF family.

Functionally, component of the cytosolic iron-sulfur (Fe/S) protein assembly machinery. Required for maturation of extramitochondrial Fe/S proteins. This is Probable cytosolic Fe-S cluster assembly factor GG21400 from Drosophila erecta (Fruit fly).